The primary structure comprises 386 residues: DNA-directed RNA polymerase subunit Rpo1C (386 aa).

This sequence belongs to the RNA polymerase beta' chain family. As to quaternary structure, part of the RNA polymerase complex.

It localises to the cytoplasm. It carries out the reaction RNA(n) + a ribonucleoside 5'-triphosphate = RNA(n+1) + diphosphate. Functionally, DNA-dependent RNA polymerase (RNAP) catalyzes the transcription of DNA into RNA using the four ribonucleoside triphosphates as substrates. Forms part of the jaw domain. The polypeptide is DNA-directed RNA polymerase subunit Rpo1C (Methanococcus vannielii (strain ATCC 35089 / DSM 1224 / JCM 13029 / OCM 148 / SB)).